The primary structure comprises 254 residues: Receptor expression-enhancing protein 2 (254 aa).

2 consecutive transmembrane segments (helical) span residues 1-21 (MVSWIISRLVVLIFGTLYPAY) and 35-55 (YVKWMMYWIVFAFFTTAETLT). Position 152 is a phosphoserine (S152). Positions 194–254 (LSLRSSTSQP…KKSSGGGDSA (61 aa)) are disordered. The span at 205–219 (PRTETSEDDLGDKAP) shows a compositional bias: basic and acidic residues.

It belongs to the DP1 family. As to quaternary structure, interacts with odorant receptor proteins.

The protein resides in the membrane. Functionally, required for endoplasmic reticulum (ER) network formation, shaping and remodeling. May enhance the cell surface expression of odorant receptors. The protein is Receptor expression-enhancing protein 2 (Reep2) of Mus musculus (Mouse).